Consider the following 596-residue polypeptide: Elongation factor 4 (596 aa).

In terms of domain architecture, tr-type G spans 2–183 (KNIRNFSIIA…AIITRIPAPN (182 aa)). Residues 14–19 (DHGKST) and 130–133 (NKID) each bind GTP.

The protein belongs to the TRAFAC class translation factor GTPase superfamily. Classic translation factor GTPase family. LepA subfamily.

It is found in the cell inner membrane. The catalysed reaction is GTP + H2O = GDP + phosphate + H(+). Required for accurate and efficient protein synthesis under certain stress conditions. May act as a fidelity factor of the translation reaction, by catalyzing a one-codon backward translocation of tRNAs on improperly translocated ribosomes. Back-translocation proceeds from a post-translocation (POST) complex to a pre-translocation (PRE) complex, thus giving elongation factor G a second chance to translocate the tRNAs correctly. Binds to ribosomes in a GTP-dependent manner. This Campylobacter concisus (strain 13826) protein is Elongation factor 4.